Consider the following 241-residue polypeptide: Small ribosomal subunit protein uS2 (241 aa).

Belongs to the universal ribosomal protein uS2 family.

The chain is Small ribosomal subunit protein uS2 from Escherichia coli O127:H6 (strain E2348/69 / EPEC).